The primary structure comprises 396 residues: Calcium-responsive transactivator (396 aa).

The segment at 1 to 148 is N-terminal auto-inhibitory domain; necessary for interaction with SMARCA4/BRG1; the sequence is MSVAFASARP…TLPTTSMSIS (148 aa). Positions 50–53 match the SH2-binding motif; that stretch reads YQQI. Disordered regions lie at residues 72–162, 192–280, and 311–396; these read QSLL…SQGV, QAAT…GDYA, and SQQQ…NYQQ. Residues 90 to 106 are compositionally biased toward low complexity; that stretch reads LTQSGSSQGLHSQGSLS. Polar residues-rich tracts occupy residues 107 to 122 and 128 to 147; these read DAISTGLPPSSLLQGQ and SHVSMQQTAPNTLPTTSMSI. The interval 149–232 is methionine-rich intra-molecular domain; the sequence is GPGYSHAGPA…GSSMMGQRPM (84 aa). Composition is skewed to low complexity over residues 199–229, 238–261, and 311–369; these read SSAQGGSQHYQGQSSIAMMGQGSQGSSMMGQ, SQQGSSQQYLGQEEYYGEQYSHSQ, and SQQQ…YGSY. Positions 246–317 are MFD domain; it reads YLGQEEYYGE…SQYSQQQAGY (72 aa). The tract at residues 334 to 396 is necessary for nuclear localization; the sequence is SQQSYPGQQQ…EQGQYGNYQQ (63 aa). The SH2-binding motif lies at 353 to 356; it reads SQYP. Positions 371–379 match the SH3-binding motif; the sequence is APQTAPSAQ. Positions 384–396 are enriched in low complexity; sequence YGYEQGQYGNYQQ. Residues 387-396 form a necessary for interaction with CREBBP and for the recruitment of CREBBP to the nuclear bodies region; that stretch reads EQGQYGNYQQ. An SH2-binding motif is present at residues 391-394; that stretch reads YGNY.

This sequence belongs to the SS18 family. In terms of assembly, homodimer. Dimerization may be necessary for its function in neuronal dendritic development. Interacts (via C-terminus) with CREBBP (via N-terminus), EP300 and SMARCA4/BRG1. Interacts with the nBAF complex. Association with CREBBP facilitates transcription while the association with SMARCA4/BRG1 suppresses CREST-mediated transcription in resting neurons. Ubiquitous; with lowest levels in spleen.

It localises to the nucleus. Its subcellular location is the chromosome. It is found in the centromere. The protein localises to the kinetochore. In terms of biological role, transcriptional activator which is required for calcium-dependent dendritic growth and branching in cortical neurons. Recruits CREB-binding protein (CREBBP) to nuclear bodies. Component of the CREST-BRG1 complex, a multiprotein complex that regulates promoter activation by orchestrating a calcium-dependent release of a repressor complex and a recruitment of an activator complex. In resting neurons, transcription of the c-FOS promoter is inhibited by BRG1-dependent recruitment of a phospho-RB1-HDAC1 repressor complex. Upon calcium influx, RB1 is dephosphorylated by calcineurin, which leads to release of the repressor complex. At the same time, there is increased recruitment of CREBBP to the promoter by a CREST-dependent mechanism, which leads to transcriptional activation. The CREST-BRG1 complex also binds to the NR2B promoter, and activity-dependent induction of NR2B expression involves a release of HDAC1 and recruitment of CREBBP. This chain is Calcium-responsive transactivator (SS18L1), found in Homo sapiens (Human).